We begin with the raw amino-acid sequence, 349 residues long: Ferredoxin--NADP reductase 1 (349 aa).

FAD is bound by residues E36, K44, Y48, V88, L123, D290, and S331.

The protein belongs to the ferredoxin--NADP reductase type 2 family. In terms of assembly, homodimer. Requires FAD as cofactor.

It catalyses the reaction 2 reduced [2Fe-2S]-[ferredoxin] + NADP(+) + H(+) = 2 oxidized [2Fe-2S]-[ferredoxin] + NADPH. In Bacillus licheniformis (strain ATCC 14580 / DSM 13 / JCM 2505 / CCUG 7422 / NBRC 12200 / NCIMB 9375 / NCTC 10341 / NRRL NRS-1264 / Gibson 46), this protein is Ferredoxin--NADP reductase 1.